Here is a 272-residue protein sequence, read N- to C-terminus: Exosome complex component Rrp42 (272 aa).

The protein belongs to the RNase PH family. Rrp42 subfamily. As to quaternary structure, component of the archaeal exosome complex. Forms a hexameric ring-like arrangement composed of 3 Rrp41-Rrp42 heterodimers. The hexameric ring associates with a trimer of Rrp4 and/or Csl4 subunits.

It is found in the cytoplasm. Non-catalytic component of the exosome, which is a complex involved in RNA degradation. Contributes to the structuring of the Rrp41 active site. The chain is Exosome complex component Rrp42 from Thermococcus kodakarensis (strain ATCC BAA-918 / JCM 12380 / KOD1) (Pyrococcus kodakaraensis (strain KOD1)).